The following is a 303-amino-acid chain: Vesicle-trafficking protein SEC22c (303 aa).

The Cytoplasmic portion of the chain corresponds to 1-183 (MSMILFASIV…EPAPNLRMKP (183 aa)). In terms of domain architecture, Longin spans 8–119 (SIVRVRDGLP…YAFLEFDSVI (112 aa)). A helical transmembrane segment spans residues 184–204 (VTALGVLSLVLNIMCAALNLI). Over 205-223 (RGVHLAEHSLQVAQEEVGN) the chain is Lumenal. A helical transmembrane segment spans residues 224–244 (ILAFFIPSVACIVQCYLYLFY). Residues 245–248 (SPAR) lie on the Cytoplasmic side of the membrane. A helical transmembrane segment spans residues 249–269 (TLKVLLMLASICLGNAYLHGL). R270 is a topological domain (lumenal). A helical transmembrane segment spans residues 271 to 291 (NTWQILFHVGVAFLSSYQILT). Residues 292 to 303 (RQLQERQSDYGV) lie on the Cytoplasmic side of the membrane.

Belongs to the synaptobrevin family.

The protein resides in the endoplasmic reticulum membrane. Functionally, may be involved in vesicle transport between the ER and the Golgi complex. The protein is Vesicle-trafficking protein SEC22c (Sec22c) of Mus musculus (Mouse).